A 246-amino-acid chain; its full sequence is MEKTVIGVVHLLPLPGSPEHTDLSAVIDKAVKDARAIEEGGADALILENYGDKPFLKEVGKETVAAMTVIACEVKRDVSIGLGINVLRNDAVAALAIAKAVNADFVRVNQLFFTSVSPEGILEGKAGEVMRYKKLVDCRAMIFADIAVKHAVHFASLEDYCLNAERSLADAVILTGKTTGGEVSLEELKYAKKTLKMPVLAGSGVNAENAARILKWCDGVIVGTYIKRGGLVDAERVRRIVRAAKG.

This sequence belongs to the BtpA family.

This is an uncharacterized protein from Archaeoglobus fulgidus (strain ATCC 49558 / DSM 4304 / JCM 9628 / NBRC 100126 / VC-16).